A 643-amino-acid polypeptide reads, in one-letter code: Galactan 5-O-arabinofuranosyltransferase (643 aa).

The next 13 helical transmembrane spans lie at 25-45 (VLVALGQLAAAVVVAVGVAVV), 66-86 (ALTTVGQVGCLAGLVGIGWLW), 97-117 (LGGLVLVSAFTVVTLGMPLGA), 180-200 (FKPWAITSMAIAVAVALVLWW), 205-225 (FEYALLVTVATAAVMLAYSSP), 229-249 (AAMITVLLPPMLVLTWSGLGA), 255-272 (WAAVVGAGVFLGFAATWY), 276-293 (VAYGAFTVVLMALLLAGS), 309-329 (LAVVGAIAAAIGSTTWLPYLL), 355-375 (FPMLQFSLLGAICLLGTLWLV), 384-404 (AGALAIGVLAVYLWSLLSMLA), 420-440 (LSVLLVAAGAFGFVEAVQALG), and 445-465 (GVIPMAAAIGLAGAIAFSQDI). Over 466–643 (PDVLRPDLTI…LAIRKPQESA (178 aa)) the chain is Extracellular.

The protein belongs to the glycosyltransferase 85 family.

The protein localises to the cell membrane. The enzyme catalyses Adds an alpha-D-arabinofuranosyl group from trans,octacis-decaprenylphospho-beta-D-arabinofuranose at the 5-O-position of the eighth, tenth and twelfth galactofuranose unit of the galactofuranan chain of [beta-D-galactofuranosyl-(1-&gt;5)-beta-D-galactofuranosyl-(1-&gt;6)]14-beta-D-galactofuranosyl-(1-&gt;5)-beta-D-galactofuranosyl-(1-&gt;4)-alpha-L-rhamnopyranosyl-(1-&gt;3)-N-acetyl-alpha-D-glucosaminyl-diphospho-trans,octacis-decaprenol.. Its pathway is cell wall biogenesis; cell wall polysaccharide biosynthesis. In terms of biological role, involved in the biosynthesis of the arabinogalactan (AG) region of the mycolylarabinogalactan-peptidoglycan (mAGP) complex, an essential component of the mycobacterial cell wall. Catalyzes the addition of the first key arabinofuranosyl (Araf) residue from the sugar donor decaprenyl-phospho-arabinose (DPA) on the C-5 of a 6-linked galactofuranosyl (Galf) of the galactan domain, thus 'priming' the galactan for further elaboration by other arabinofuranosyltransferases. It is not able to add an Araf residue to a terminal Galf. The protein is Galactan 5-O-arabinofuranosyltransferase of Mycobacterium tuberculosis (strain CDC 1551 / Oshkosh).